We begin with the raw amino-acid sequence, 116 residues long: Venom nerve growth factor (116 aa).

Cystine bridges form between cysteine 14/cysteine 78, cysteine 56/cysteine 106, and cysteine 66/cysteine 108. Residue lysine 86 participates in a 1,2-diacyl-sn-glycerol binding.

This sequence belongs to the NGF-beta family. Homodimer; non-covalently linked. Interacts with NTRK1. In terms of processing, not glycosylated. As to expression, expressed by the venom gland.

It is found in the secreted. Functionally, nerve growth factor is important for the development and maintenance of the sympathetic and sensory nervous systems. It stimulates division and differentiation of sympathetic and embryonic sensory neurons as well as basal forebrain cholinergic neurons in the brain. Its relevance in the snake venom is not clear. However, it has been shown to inhibit metalloproteinase-dependent proteolysis of platelet glycoprotein Ib alpha, suggesting a metalloproteinase inhibition to prevent metalloprotease autodigestion and/or protection against prey proteases. Binds a lipid between the two protein chains in the homodimer. The lipid-bound form promotes histamine relase from mouse mast cells, contrary to the lipid-free form. This is Venom nerve growth factor from Naja atra (Chinese cobra).